A 394-amino-acid chain; its full sequence is Na(+)/H(+) antiporter NhaA (394 aa).

11 helical membrane-spanning segments follow: residues 11–31 (LEAA…IFAN), 59–79 (LLMW…GMEV), 95–115 (IFPA…YWFI), 125–145 (GWAI…ALLS), 155–175 (FLLA…ALFF), 177–197 (HEMS…LVAM), 203–220 (TGLI…ASVL), 254–274 (ALAP…NAGV), 296–316 (LIIG…LLGI), 328–348 (IFAI…IAGL), and 365–385 (LGIL…LKIT).

This sequence belongs to the NhaA Na(+)/H(+) (TC 2.A.33) antiporter family.

The protein localises to the cell inner membrane. It catalyses the reaction Na(+)(in) + 2 H(+)(out) = Na(+)(out) + 2 H(+)(in). In terms of biological role, na(+)/H(+) antiporter that extrudes sodium in exchange for external protons. The protein is Na(+)/H(+) antiporter NhaA of Actinobacillus pleuropneumoniae serotype 3 (strain JL03).